The following is a 127-amino-acid chain: Mitochondrial pyruvate carrier 2 (127 aa).

Over 2 to 40 (AAAGARGLRATYHRLMDKVELLLPKKLRPLYNHPAGPRT) the chain is Mitochondrial matrix. Lys26 carries the post-translational modification N6-acetyllysine. The helical transmembrane segment at 41–61 (VFFWAPIMKWGLVCAGLADMA) threads the bilayer. The Mitochondrial intermembrane segment spans residues 62-72 (RPAEKLSTAQS). Residues 73 to 90 (TVLMATGFIWSRYSLVII) form a helical membrane-spanning segment. Residues 91–95 (PKNWS) lie on the Mitochondrial matrix side of the membrane. Residues 96–115 (LFAVNFFVGSAGASQLFRIW) traverse the membrane as a helical segment. Topologically, residues 116–127 (KYNQELKSKGIQ) are mitochondrial intermembrane.

The protein belongs to the mitochondrial pyruvate carrier (MPC) (TC 2.A.105) family. In terms of assembly, homodimer. Homooligomer. Forms heterodimers with MPC1 and MPC1L. The heterodimer is the more stable and dominant form. Liver, kidney, and brain.

It is found in the mitochondrion inner membrane. It carries out the reaction pyruvate(out) + H(+)(out) = pyruvate(in) + H(+)(in). In terms of biological role, mediates the uptake of pyruvate into mitochondria. This Rattus norvegicus (Rat) protein is Mitochondrial pyruvate carrier 2 (Mpc2).